Consider the following 437-residue polypeptide: Trigger factor (437 aa).

Residues glycine 164 to proline 249 form the PPIase FKBP-type domain.

Belongs to the FKBP-type PPIase family. Tig subfamily.

Its subcellular location is the cytoplasm. The enzyme catalyses [protein]-peptidylproline (omega=180) = [protein]-peptidylproline (omega=0). Functionally, involved in protein export. Acts as a chaperone by maintaining the newly synthesized protein in an open conformation. Functions as a peptidyl-prolyl cis-trans isomerase. The sequence is that of Trigger factor from Azoarcus sp. (strain BH72).